We begin with the raw amino-acid sequence, 156 residues long: Deoxyuridine 5'-triphosphate nucleotidohydrolase (156 aa).

Substrate is bound by residues 76–78 (RSG), Asn-89, 93–95 (TVD), and Lys-103.

It belongs to the dUTPase family. Mg(2+) serves as cofactor.

It carries out the reaction dUTP + H2O = dUMP + diphosphate + H(+). It participates in pyrimidine metabolism; dUMP biosynthesis; dUMP from dCTP (dUTP route): step 2/2. In terms of biological role, this enzyme is involved in nucleotide metabolism: it produces dUMP, the immediate precursor of thymidine nucleotides and it decreases the intracellular concentration of dUTP so that uracil cannot be incorporated into DNA. This is Deoxyuridine 5'-triphosphate nucleotidohydrolase from Rhizobium leguminosarum bv. trifolii (strain WSM2304).